Here is a 75-residue protein sequence, read N- to C-terminus: Large ribosomal subunit protein bL31 (75 aa).

In terms of assembly, part of the 50S ribosomal subunit.

Binds the 23S rRNA. The protein is Large ribosomal subunit protein bL31 of Rhodopseudomonas palustris (strain ATCC BAA-98 / CGA009).